Here is a 717-residue protein sequence, read N- to C-terminus: Putative amino acid transporter AAT1 (717 aa).

Positions 1–10 are enriched in basic and acidic residues; sequence MREGAFDASR. The disordered stretch occupies residues 1–88; sequence MREGAFDASR…DRAQTDSRQE (88 aa). Over residues 16 to 25 the composition is skewed to polar residues; sequence QRPSSLSTAQ. Residues 26-53 show a composition bias toward low complexity; sequence PPSDSRPPSSSSPPSSSSSSSSASSSSP. Residues 74–88 show a composition bias toward basic and acidic residues; the sequence is SAEKMDRAQTDSRQE. The next 8 helical transmembrane spans lie at 124–143, 149–170, 196–216, 236–253, 265–283, 303–320, 341–358, and 378–402; these read VLTLASSCLGAGVLATPYAM, LIGLSLLCMHTFVSFFTTYILM, AVDAIIVLNGLGVCLSFLVFL, HRAALLCASMVVIFPLSV, FFPVCALLFSLSCVVYRSL, FKSFNVFLFAFMQHINVC, AALLEYCLYTPIATLGYL, and LMHVCTLLLSFSMVLGVPLTLIPTV. The disordered stretch occupies residues 462-602; the sequence is GDAEYGGAEA…REEREEREGQ (141 aa). A compositionally biased stretch (low complexity) spans 463 to 477; it reads DAEYGGAEAGEATRG. A compositionally biased stretch (basic and acidic residues) spans 497-519; the sequence is ARNRDRSRLHADSERSAGDREGS. Residues 547-558 show a composition bias toward low complexity; that stretch reads GSSSASSRSVDS. The segment covering 584-602 has biased composition (basic and acidic residues); it reads SGDREAREEREEREEREGQ. Transmembrane regions (helical) follow at residues 622 to 638, 644 to 669, and 681 to 702; these read VCVAACLLPVLLLALVL, VVGLLGGFFSTLLMSALPSIIFYAGI, and LLMVFLLGVTCVGAFSSVIIIL.

The protein belongs to the amino acid/polyamine transporter 2 family.

It is found in the vacuole membrane. Functionally, putative amino acid transporter. Probably transports arginine. Involved in maintaining the osmotic homeostasis of the digestive vacuole. Required for extracellular parasite survival and bradyzoite differentiation. The sequence is that of Putative amino acid transporter AAT1 from Toxoplasma gondii (strain ATCC 50611 / Me49).